The primary structure comprises 236 residues: Purine nucleoside phosphorylase DeoD-type (236 aa).

A purine D-ribonucleoside is bound at residue H5. Phosphate contacts are provided by residues G21, R25, R44, and 88-91 (RVGT). Residues 180-182 (DME) and 204-205 (SD) each bind a purine D-ribonucleoside. Catalysis depends on D205, which acts as the Proton donor.

This sequence belongs to the PNP/UDP phosphorylase family. Homohexamer; trimer of homodimers.

The catalysed reaction is a purine D-ribonucleoside + phosphate = a purine nucleobase + alpha-D-ribose 1-phosphate. It catalyses the reaction a purine 2'-deoxy-D-ribonucleoside + phosphate = a purine nucleobase + 2-deoxy-alpha-D-ribose 1-phosphate. Its function is as follows. Catalyzes the reversible phosphorolytic breakdown of the N-glycosidic bond in the beta-(deoxy)ribonucleoside molecules, with the formation of the corresponding free purine bases and pentose-1-phosphate. This Buchnera aphidicola subsp. Schizaphis graminum (strain Sg) protein is Purine nucleoside phosphorylase DeoD-type.